Reading from the N-terminus, the 373-residue chain is UDP-glucose 4-epimerase 3 (373 aa).

NAD(+) is bound at residue 27-58 (SVLVTGGAGYIGTHTVLRLLEKGFAVTVVDNF). Ser153 serves as a coordination point for substrate. Tyr177 functions as the Proton acceptor in the catalytic mechanism.

It belongs to the NAD(P)-dependent epimerase/dehydratase family. NAD(+) is required as a cofactor.

The enzyme catalyses UDP-alpha-D-glucose = UDP-alpha-D-galactose. It functions in the pathway carbohydrate metabolism; galactose metabolism. In terms of biological role, catalyzes the interconversion between UDP-glucose and UDP-galactose. The polypeptide is UDP-glucose 4-epimerase 3 (UGE-3) (Oryza sativa subsp. japonica (Rice)).